A 372-amino-acid polypeptide reads, in one-letter code: Integral membrane protein GPR137B (372 aa).

At 1–32 (MESPAWDATKNDSLPPTLTPAVPPYVKLGLTT) the chain is on the lumenal side. Residue N11 is glycosylated (N-linked (GlcNAc...) asparagine). The chain crosses the membrane as a helical span at residues 33-53 (VYTIFYLLLFAFVYVQLWLVL). Residues 54–64 (HYKHKRFSYQT) lie on the Cytoplasmic side of the membrane. The helical transmembrane segment at 65-85 (VFLFLCLLWASLRAVLFSFYF) threads the bilayer. Residues 86 to 93 (RNFVEANR) lie on the Lumenal side of the membrane. A helical transmembrane segment spans residues 94 to 114 (LGAFTFWLLYCFPVCLQFFTL). Topologically, residues 115–144 (TLMNLYFARVIYKAKSKYLPELIKYRLPLY) are cytoplasmic. The helical transmembrane segment at 145 to 165 (LAFLVISLLFLVVNLTCAILV) threads the bilayer. Over 166–173 (KTDYAETK) the chain is Lumenal. Residues 174-194 (VIVSIRVAINDTLFVLCAVSL) traverse the membrane as a helical segment. The Cytoplasmic portion of the chain corresponds to 195 to 222 (SVCLYKISKMSLAGVYLESKGSSVCQVT). The chain crosses the membrane as a helical span at residues 223–243 (CIGVTVILLYTSRACYNLVVL). Over 244-276 (SLSDSRYSSFDYDWYNVSDQADLKCKLGDAGYV) the chain is Lumenal. Residue N259 is glycosylated (N-linked (GlcNAc...) asparagine). The chain crosses the membrane as a helical span at residues 277–297 (VFGIILFIWELFPTSLVVYFF). Residues 298-372 (RVRNSAQDMT…QTGSLQRDST (75 aa)) lie on the Cytoplasmic side of the membrane.

This sequence belongs to the GPR137 family.

It is found in the lysosome membrane. Functionally, lysosomal integral membrane protein that regulates the localization and activity of mTORC1, a signaling complex promoting cell growth in response to growth factors, energy levels, and amino acids. Interacts with Rag GTPases and increases the lysosomial localization and activity of Rag GTPases and thereby regulates mTORC1 translocation and activity in lysosome. Involved in the regulation of lysosomal morphology and autophagy. Also acts as a negative regulator of osteoclast activity. Its function is as follows. Also acts as a negative regulator of osteoclast activity. In Xenopus laevis (African clawed frog), this protein is Integral membrane protein GPR137B (gpr137b).